The primary structure comprises 117 residues: MARVTVEDCVDKVPNRFELVLLAAHRAREISAGAAITVDRDNDKNPVVSLREIADETQSADDLRERLIEANQTQIEVDEPEEDQMALLMGAESDRPVEDDMSEERLLRALMEAQGQG.

It belongs to the RNA polymerase subunit omega family. In terms of assembly, the RNAP catalytic core consists of 2 alpha, 1 beta, 1 beta' and 1 omega subunit. When a sigma factor is associated with the core the holoenzyme is formed, which can initiate transcription.

The enzyme catalyses RNA(n) + a ribonucleoside 5'-triphosphate = RNA(n+1) + diphosphate. Its function is as follows. Promotes RNA polymerase assembly. Latches the N- and C-terminal regions of the beta' subunit thereby facilitating its interaction with the beta and alpha subunits. This chain is DNA-directed RNA polymerase subunit omega, found in Ruegeria pomeroyi (strain ATCC 700808 / DSM 15171 / DSS-3) (Silicibacter pomeroyi).